The primary structure comprises 261 residues: 5'-nucleotidase SurE (261 aa).

A divalent metal cation contacts are provided by D10, D11, S41, and N96.

It belongs to the SurE nucleotidase family. A divalent metal cation is required as a cofactor.

The protein resides in the cytoplasm. It carries out the reaction a ribonucleoside 5'-phosphate + H2O = a ribonucleoside + phosphate. In terms of biological role, nucleotidase that shows phosphatase activity on nucleoside 5'-monophosphates. This chain is 5'-nucleotidase SurE, found in Methanococcoides burtonii (strain DSM 6242 / NBRC 107633 / OCM 468 / ACE-M).